Consider the following 320-residue polypeptide: Ribose-phosphate pyrophosphokinase (320 aa).

ATP-binding positions include 43–45 (DGE) and 102–103 (RQ). The Mg(2+) site is built by histidine 136 and aspartate 178. Lysine 201 is a catalytic residue. Residues arginine 203, aspartate 227, and 231–235 (DTAGT) each bind D-ribose 5-phosphate.

Belongs to the ribose-phosphate pyrophosphokinase family. Class I subfamily. In terms of assembly, homohexamer. It depends on Mg(2+) as a cofactor.

The protein resides in the cytoplasm. It catalyses the reaction D-ribose 5-phosphate + ATP = 5-phospho-alpha-D-ribose 1-diphosphate + AMP + H(+). It functions in the pathway metabolic intermediate biosynthesis; 5-phospho-alpha-D-ribose 1-diphosphate biosynthesis; 5-phospho-alpha-D-ribose 1-diphosphate from D-ribose 5-phosphate (route I): step 1/1. Involved in the biosynthesis of the central metabolite phospho-alpha-D-ribosyl-1-pyrophosphate (PRPP) via the transfer of pyrophosphoryl group from ATP to 1-hydroxyl of ribose-5-phosphate (Rib-5-P). This chain is Ribose-phosphate pyrophosphokinase, found in Clostridium tetani (strain Massachusetts / E88).